The chain runs to 160 residues: MNDDKTERPVKTANQRGAARLAAVQALYQMDVGGTGVLEIVAEYEAHRLGQEIDGETYLKADAAWFRSIVSGVVRDQVRLDPLIAAALQDDWALSRLDSTVRAILRAGVFEITDRKDVPVAVIVTEYVEIAQAFFDDDEPKLVNAVLDRIAKQVRGEPKK.

Belongs to the NusB family.

In terms of biological role, involved in transcription antitermination. Required for transcription of ribosomal RNA (rRNA) genes. Binds specifically to the boxA antiterminator sequence of the ribosomal RNA (rrn) operons. In Rhizobium johnstonii (strain DSM 114642 / LMG 32736 / 3841) (Rhizobium leguminosarum bv. viciae), this protein is Transcription antitermination protein NusB.